We begin with the raw amino-acid sequence, 418 residues long: Glutamyl-tRNA reductase (418 aa).

Substrate-binding positions include 49 to 52 (TCNR), Ser109, 114 to 116 (EPQ), and Gln120. Cys50 (nucleophile) is an active-site residue. 189–194 (GAGETI) lines the NADP(+) pocket.

It belongs to the glutamyl-tRNA reductase family. As to quaternary structure, homodimer.

It catalyses the reaction (S)-4-amino-5-oxopentanoate + tRNA(Glu) + NADP(+) = L-glutamyl-tRNA(Glu) + NADPH + H(+). The protein operates within porphyrin-containing compound metabolism; protoporphyrin-IX biosynthesis; 5-aminolevulinate from L-glutamyl-tRNA(Glu): step 1/2. Its function is as follows. Catalyzes the NADPH-dependent reduction of glutamyl-tRNA(Glu) to glutamate 1-semialdehyde (GSA). The sequence is that of Glutamyl-tRNA reductase from Escherichia coli O9:H4 (strain HS).